We begin with the raw amino-acid sequence, 165 residues long: Nucleotide-binding protein P9215_05621 (165 aa).

Belongs to the YajQ family.

Nucleotide-binding protein. This chain is Nucleotide-binding protein P9215_05621, found in Prochlorococcus marinus (strain MIT 9215).